A 361-amino-acid polypeptide reads, in one-letter code: tRNA-specific 2-thiouridylase MnmA (361 aa).

Residues 11 to 18 (GMSGGVDS) and Met37 contribute to the ATP site. The active-site Nucleophile is the Cys106. A disulfide bridge links Cys106 with Cys202. Gly130 is an ATP binding site. An interaction with tRNA region spans residues 152-154 (KDQ). Catalysis depends on Cys202, which acts as the Cysteine persulfide intermediate. The segment at 308–309 (RY) is interaction with tRNA.

Belongs to the MnmA/TRMU family.

It localises to the cytoplasm. The catalysed reaction is S-sulfanyl-L-cysteinyl-[protein] + uridine(34) in tRNA + AH2 + ATP = 2-thiouridine(34) in tRNA + L-cysteinyl-[protein] + A + AMP + diphosphate + H(+). Functionally, catalyzes the 2-thiolation of uridine at the wobble position (U34) of tRNA, leading to the formation of s(2)U34. This Clostridium botulinum (strain Alaska E43 / Type E3) protein is tRNA-specific 2-thiouridylase MnmA.